A 194-amino-acid polypeptide reads, in one-letter code: Ion-translocating oxidoreductase complex subunit A (194 aa).

6 helical membrane passes run 4 to 24, 39 to 59, 71 to 91, 102 to 122, 135 to 155, and 172 to 192; these read LALI…QFLG, IGLS…SYIL, FLRT…TEML, VLGI…VALL, TTQG…FAAL, and AIGM…SGLI.

Belongs to the NqrDE/RnfAE family. The complex is composed of six subunits: RnfA, RnfB, RnfC, RnfD, RnfE and RnfG.

Its subcellular location is the cell inner membrane. In terms of biological role, part of a membrane-bound complex that couples electron transfer with translocation of ions across the membrane. This is Ion-translocating oxidoreductase complex subunit A from Pseudomonas paraeruginosa (strain DSM 24068 / PA7) (Pseudomonas aeruginosa (strain PA7)).